The primary structure comprises 77 residues: Large ribosomal subunit protein bL28 (77 aa).

It belongs to the bacterial ribosomal protein bL28 family.

The sequence is that of Large ribosomal subunit protein bL28 from Methylibium petroleiphilum (strain ATCC BAA-1232 / LMG 22953 / PM1).